The sequence spans 127 residues: uncharacterized protein (127 aa).

Positions 1–34 are disordered; that stretch reads MKNPESSGVSSSPQIQRVSPSSSSTSPSPPSIGT. Positions 9–34 are enriched in low complexity; it reads VSSSPQIQRVSPSSSSTSPSPPSIGT. The next 2 membrane-spanning stretches (helical) occupy residues 47 to 67 and 84 to 104; these read IAAV…PLAM and TIAV…YLLV.

The protein resides in the membrane. This is an uncharacterized protein from Saccharomyces cerevisiae (strain ATCC 204508 / S288c) (Baker's yeast).